A 440-amino-acid chain; its full sequence is Phosphatidylglycerol--prolipoprotein diacylglyceryl transferase (440 aa).

The next 4 helical transmembrane spans lie at valine 21 to glycine 41, glycine 53 to tyrosine 73, isoleucine 96 to isoleucine 116, and glycine 122 to isoleucine 142. Arginine 144 lines the a 1,2-diacyl-sn-glycero-3-phospho-(1'-sn-glycerol) pocket. 2 helical membrane passes run valine 189–valine 209 and isoleucine 256–proline 276. Residues glutamate 280–arginine 440 are disordered. Positions glutamate 299–alanine 330 are enriched in low complexity. The segment covering arginine 332–serine 346 has biased composition (basic and acidic residues). Over residues glutamate 347–glutamate 417 the composition is skewed to acidic residues. Positions glutamate 424–arginine 440 are enriched in basic and acidic residues.

It belongs to the Lgt family.

The protein resides in the cell membrane. The enzyme catalyses L-cysteinyl-[prolipoprotein] + a 1,2-diacyl-sn-glycero-3-phospho-(1'-sn-glycerol) = an S-1,2-diacyl-sn-glyceryl-L-cysteinyl-[prolipoprotein] + sn-glycerol 1-phosphate + H(+). The protein operates within protein modification; lipoprotein biosynthesis (diacylglyceryl transfer). Its function is as follows. Catalyzes the transfer of the diacylglyceryl group from phosphatidylglycerol to the sulfhydryl group of the N-terminal cysteine of a prolipoprotein, the first step in the formation of mature lipoproteins. The polypeptide is Phosphatidylglycerol--prolipoprotein diacylglyceryl transferase (Mycobacterium avium (strain 104)).